The sequence spans 510 residues: Cobyric acid synthase (510 aa).

The 210-residue stretch at 249-458 folds into the GATase cobBQ-type domain; the sequence is CFKVRVLVYP…LHGLFDSPDA (210 aa). C336 functions as the Nucleophile in the catalytic mechanism. Residue H450 is part of the active site.

It belongs to the CobB/CobQ family. CobQ subfamily.

It functions in the pathway cofactor biosynthesis; adenosylcobalamin biosynthesis. Catalyzes amidations at positions B, D, E, and G on adenosylcobyrinic A,C-diamide. NH(2) groups are provided by glutamine, and one molecule of ATP is hydrogenolyzed for each amidation. In Shewanella oneidensis (strain ATCC 700550 / JCM 31522 / CIP 106686 / LMG 19005 / NCIMB 14063 / MR-1), this protein is Cobyric acid synthase.